Consider the following 159-residue polypeptide: Regulator of G-protein signaling 13 (159 aa).

The RGS domain occupies 34–150 (SFENLMATKY…LKSEMYQKLL (117 aa)).

Functionally, inhibits signal transduction by increasing the GTPase activity of G protein alpha subunits thereby driving them into their inactive GDP-bound form. Binds to both G(i)-alpha and G(q)-alpha. The chain is Regulator of G-protein signaling 13 (RGS13) from Homo sapiens (Human).